A 189-amino-acid chain; its full sequence is Lutzicidin (189 aa).

An N-terminal signal peptide occupies residues methionine 1 to alanine 22. Positions histidine 23–valine 155 are excised as a propeptide. Cystine bridges form between cysteine 79–cysteine 90 and cysteine 101–cysteine 118. The span at glutamate 125–glutamate 148 shows a compositional bias: acidic residues. The segment at glutamate 125–proline 152 is disordered.

Belongs to the cathelicidin family. Expressed by the venom gland.

The protein resides in the secreted. The protein localises to the target cell membrane. Potent antimicrobial peptide against Gram-negative and Gram-positive bacteria. Adopts an amphipathic alpha helical conformation, that may allow to partition into the target membrane. Low hemolytic activities have been observed on mammalian cells. In Bothrops lutzi (Sertao lancehead), this protein is Lutzicidin.